A 77-amino-acid chain; its full sequence is Small ribosomal subunit protein uS17c (77 aa).

The protein belongs to the universal ribosomal protein uS17 family. Part of the 30S ribosomal subunit.

It is found in the plastid. The protein localises to the chloroplast. Its function is as follows. One of the primary rRNA binding proteins, it binds specifically to the 5'-end of 16S ribosomal RNA. This chain is Small ribosomal subunit protein uS17c (rps17), found in Cyanidium caldarium (Red alga).